The sequence spans 242 residues: UPF0157 protein PA4798 (242 aa).

A disordered region spans residues 215-242; that stretch reads AGAESTPGGPADTAYFESLRSRVSKPQD.

This sequence belongs to the UPF0157 (GrpB) family.

The sequence is that of UPF0157 protein PA4798 from Pseudomonas aeruginosa (strain ATCC 15692 / DSM 22644 / CIP 104116 / JCM 14847 / LMG 12228 / 1C / PRS 101 / PAO1).